Consider the following 239-residue polypeptide: MGKSLIQQRRGKGTTTFRAPSHRYRGAVRYVPLNLVQERTLRGVVEEILHDPGRTAPVARVKFEDGTKKLIIAPEGVLVGQEIYIGPEAPIAIGNTLPLAKIPEGTYVYDIEGVPGDGGKYVRAGGTYALVVSREKDKVIVQLPSGELKAFNPMCRATIGVVAGGGRLEKPIVKAGKAYYIAKARNRFWPKPRGVKMNAVNHPHGGKEHHIGRPSTVSRRAPPGRKVGHIAARRTGRRK.

Residues 200–239 (VNHPHGGKEHHIGRPSTVSRRAPPGRKVGHIAARRTGRRK) form a disordered region. A compositionally biased stretch (basic residues) spans 222-239 (PPGRKVGHIAARRTGRRK).

It belongs to the universal ribosomal protein uL2 family. As to quaternary structure, part of the 50S ribosomal subunit. Forms a bridge to the 30S subunit in the 70S ribosome.

In terms of biological role, one of the primary rRNA binding proteins. Required for association of the 30S and 50S subunits to form the 70S ribosome, for tRNA binding and peptide bond formation. It has been suggested to have peptidyltransferase activity; this is somewhat controversial. Makes several contacts with the 16S rRNA in the 70S ribosome. This chain is Large ribosomal subunit protein uL2, found in Thermococcus kodakarensis (strain ATCC BAA-918 / JCM 12380 / KOD1) (Pyrococcus kodakaraensis (strain KOD1)).